Consider the following 152-residue polypeptide: Transcription elongation factor Spt5 (152 aa).

Residues 94 to 124 (PGDLVEVIAGPFKGQKAKVVKIDESKDEVVV) form the KOW domain.

Belongs to the archaeal Spt5 family. As to quaternary structure, heterodimer composed of Spt4 and Spt5. Interacts with RNA polymerase (RNAP) independently of nucleic acids. Forms a homodimer in solution.

Functionally, stimulates transcription elongation. The chain is Transcription elongation factor Spt5 from Pyrococcus furiosus (strain ATCC 43587 / DSM 3638 / JCM 8422 / Vc1).